A 124-amino-acid polypeptide reads, in one-letter code: Small ribosomal subunit protein uS13 (124 aa).

A disordered region spans residues 95-124 (GLPVRGQRTKTNARTRKGPKRTIAGKKKAR).

It belongs to the universal ribosomal protein uS13 family. As to quaternary structure, part of the 30S ribosomal subunit. Forms a loose heterodimer with protein S19. Forms two bridges to the 50S subunit in the 70S ribosome.

Its function is as follows. Located at the top of the head of the 30S subunit, it contacts several helices of the 16S rRNA. In the 70S ribosome it contacts the 23S rRNA (bridge B1a) and protein L5 of the 50S subunit (bridge B1b), connecting the 2 subunits; these bridges are implicated in subunit movement. Contacts the tRNAs in the A and P-sites. This Mycolicibacterium smegmatis (strain ATCC 700084 / mc(2)155) (Mycobacterium smegmatis) protein is Small ribosomal subunit protein uS13.